We begin with the raw amino-acid sequence, 546 residues long: 2-isopropylmalate synthase (546 aa).

The region spanning 8 to 271 is the Pyruvate carboxyltransferase domain; that stretch reads ILIFDTTLRD…NSFFKRNPDS (264 aa). Mn(2+)-binding residues include D17, H208, H210, and N244. The interval 408–546 is regulatory domain; sequence QLCLVQVSCG…NKTFLSNPAN (139 aa).

Belongs to the alpha-IPM synthase/homocitrate synthase family. LeuA type 1 subfamily. In terms of assembly, homodimer. Mn(2+) is required as a cofactor.

The protein localises to the cytoplasm. It catalyses the reaction 3-methyl-2-oxobutanoate + acetyl-CoA + H2O = (2S)-2-isopropylmalate + CoA + H(+). The protein operates within amino-acid biosynthesis; L-leucine biosynthesis; L-leucine from 3-methyl-2-oxobutanoate: step 1/4. In terms of biological role, catalyzes the condensation of the acetyl group of acetyl-CoA with 3-methyl-2-oxobutanoate (2-ketoisovalerate) to form 3-carboxy-3-hydroxy-4-methylpentanoate (2-isopropylmalate). The chain is 2-isopropylmalate synthase from Prochlorococcus marinus (strain MIT 9312).